Here is a 380-residue protein sequence, read N- to C-terminus: MQQSPTAGKIINCKAAVAWQPAAPLSIENVQVFPPRVHEVRIKIVNSGVCHTDAYTLSGKDPEGLFPVILGHEGAGIVESVGPQVTTVQVGDPVIALYTPECKTCKFCKSGKTNLCGRIRTTQGKGLMPDGTSRFSCNGNTLLHFMGCSTFSEYTVVADISVVAIERLAPLDSVCLLGCGITTGYGAATITADIKEGDSVAVFGLGSVGLAVIQGAVKKRAGRIFGIDVNPEKKNWAMSFGATDFINPNDLQSPIQDVLIHETDGGLDWTFDCTGNVHVMRSALEACHKGWGQSIVIGVAAAGQEISTRPFQLVTGRVWRGCAFGGVKGRSQLPDLVKEYLDHKLEIDKYITHRRPLKEINEAFTDMHNGNCIKTVLSIP.

Cys50 serves as a coordination point for Zn(2+). His51 provides a ligand contact to NAD(+). Positions 72, 73, 102, 105, 108, 116, and 179 each coordinate Zn(2+). NAD(+) is bound by residues 204–209 (GLGSVG), Asp228, and 297–299 (IGV).

Belongs to the zinc-containing alcohol dehydrogenase family. Class-III subfamily. Zn(2+) is required as a cofactor.

It catalyses the reaction a primary alcohol + NAD(+) = an aldehyde + NADH + H(+). It carries out the reaction a secondary alcohol + NAD(+) = a ketone + NADH + H(+). The enzyme catalyses S-(hydroxymethyl)glutathione + NADP(+) = S-formylglutathione + NADPH + H(+). The catalysed reaction is S-(hydroxymethyl)glutathione + NAD(+) = S-formylglutathione + NADH + H(+). It catalyses the reaction S-nitrosoglutathione + NADH + H(+) = S-(hydroxysulfenamide)glutathione + NAD(+). Its function is as follows. Oxidizes long-chain alcohols and, in the presence of glutathione, is able to oxidize formaldehyde. Also acts as a S-nitroso-glutathione reductase by catalyzing the NADH-dependent reduction of S-nitrosoglutathione, thereby regulating protein S-nitrosylation. The sequence is that of Putative S-(hydroxymethyl)glutathione dehydrogenase 2 from Schizosaccharomyces pombe (strain 972 / ATCC 24843) (Fission yeast).